The sequence spans 122 residues: Small ribosomal subunit protein uS13 (122 aa).

A disordered region spans residues 95–122 (GLPVRGQRTHTNARTRKGPAKPIAGKKK).

Belongs to the universal ribosomal protein uS13 family. Part of the 30S ribosomal subunit. Forms a loose heterodimer with protein S19. Forms two bridges to the 50S subunit in the 70S ribosome.

Located at the top of the head of the 30S subunit, it contacts several helices of the 16S rRNA. In the 70S ribosome it contacts the 23S rRNA (bridge B1a) and protein L5 of the 50S subunit (bridge B1b), connecting the 2 subunits; these bridges are implicated in subunit movement. Contacts the tRNAs in the A and P-sites. This chain is Small ribosomal subunit protein uS13, found in Rhodospirillum rubrum (strain ATCC 11170 / ATH 1.1.1 / DSM 467 / LMG 4362 / NCIMB 8255 / S1).